The chain runs to 624 residues: Protein NRT1/ PTR FAMILY 6.1 (624 aa).

The segment at Met1–Ser20 is disordered. 2 helical membrane-spanning segments follow: residues Met83–Met100 and Phe114–Gly134. Thr138 is subject to Phosphothreonine. Transmembrane regions (helical) follow at residues Ile139–Leu159, Ser184–Ile204, Phe230–Val250, Trp258–Ala278, Leu378–Leu398, Val422–Ile442, Val459–Tyr479, Trp504–Leu524, Ser537–Leu557, and Cys585–Ala605.

This sequence belongs to the major facilitator superfamily. Proton-dependent oligopeptide transporter (POT/PTR) (TC 2.A.17) family. As to expression, expressed in flower and siliques.

It localises to the membrane. This chain is Protein NRT1/ PTR FAMILY 6.1 (NPF6.1), found in Arabidopsis thaliana (Mouse-ear cress).